Here is a 600-residue protein sequence, read N- to C-terminus: Glutamine--fructose-6-phosphate aminotransferase [isomerizing] (600 aa).

Cysteine 2 (nucleophile; for GATase activity) is an active-site residue. The Glutamine amidotransferase type-2 domain maps to 2 to 217; it reads CGIVGFIGEQ…DKEIVIVTKE (216 aa). SIS domains lie at 283–422 and 452–590; these read IRNA…AKGE and LAKQ…VDKP. Residue lysine 595 is the For Fru-6P isomerization activity of the active site.

In terms of assembly, homodimer.

It is found in the cytoplasm. It catalyses the reaction D-fructose 6-phosphate + L-glutamine = D-glucosamine 6-phosphate + L-glutamate. Its function is as follows. Catalyzes the first step in hexosamine metabolism, converting fructose-6P into glucosamine-6P using glutamine as a nitrogen source. This chain is Glutamine--fructose-6-phosphate aminotransferase [isomerizing], found in Bacillus cereus (strain ATCC 14579 / DSM 31 / CCUG 7414 / JCM 2152 / NBRC 15305 / NCIMB 9373 / NCTC 2599 / NRRL B-3711).